The following is a 278-amino-acid chain: Large ribosomal subunit protein uL2 (278 aa).

The tract at residues 208-278 is disordered; the sequence is AGRSRWMGKR…LIIRHRKGRK (71 aa). Basic residues predominate over residues 209 to 219; it reads GRSRWMGKRPQ. The span at 258–270 shows a compositional bias: basic and acidic residues; that stretch reads KTRDSKKASEKLI.

This sequence belongs to the universal ribosomal protein uL2 family. In terms of assembly, part of the 50S ribosomal subunit. Forms a bridge to the 30S subunit in the 70S ribosome.

One of the primary rRNA binding proteins. Required for association of the 30S and 50S subunits to form the 70S ribosome, for tRNA binding and peptide bond formation. It has been suggested to have peptidyltransferase activity; this is somewhat controversial. Makes several contacts with the 16S rRNA in the 70S ribosome. This Lactobacillus delbrueckii subsp. bulgaricus (strain ATCC 11842 / DSM 20081 / BCRC 10696 / JCM 1002 / NBRC 13953 / NCIMB 11778 / NCTC 12712 / WDCM 00102 / Lb 14) protein is Large ribosomal subunit protein uL2.